A 179-amino-acid polypeptide reads, in one-letter code: Ribosome maturation factor RimM (179 aa).

The PRC barrel domain occupies 99–174 (EEDEYYFDQI…IMIVDLPEGL (76 aa)).

This sequence belongs to the RimM family. As to quaternary structure, binds ribosomal protein uS19.

It is found in the cytoplasm. In terms of biological role, an accessory protein needed during the final step in the assembly of 30S ribosomal subunit, possibly for assembly of the head region. Essential for efficient processing of 16S rRNA. May be needed both before and after RbfA during the maturation of 16S rRNA. It has affinity for free ribosomal 30S subunits but not for 70S ribosomes. This Natranaerobius thermophilus (strain ATCC BAA-1301 / DSM 18059 / JW/NM-WN-LF) protein is Ribosome maturation factor RimM.